A 313-amino-acid chain; its full sequence is Probable cell division protein WhiA (313 aa).

Positions 276–309 form a DNA-binding region, H-T-H motif; it reads SLKELGEMLHPKLGKSGVNHRLRKLDEIAERIRK.

This sequence belongs to the WhiA family.

In terms of biological role, involved in cell division and chromosome segregation. In Ruminiclostridium cellulolyticum (strain ATCC 35319 / DSM 5812 / JCM 6584 / H10) (Clostridium cellulolyticum), this protein is Probable cell division protein WhiA.